Here is a 159-residue protein sequence, read N- to C-terminus: S-ribosylhomocysteine lyase (159 aa).

3 residues coordinate Fe cation: histidine 53, histidine 57, and cysteine 124.

The protein belongs to the LuxS family. As to quaternary structure, homodimer. Fe cation is required as a cofactor.

It catalyses the reaction S-(5-deoxy-D-ribos-5-yl)-L-homocysteine = (S)-4,5-dihydroxypentane-2,3-dione + L-homocysteine. Functionally, involved in the synthesis of autoinducer 2 (AI-2) which is secreted by bacteria and is used to communicate both the cell density and the metabolic potential of the environment. The regulation of gene expression in response to changes in cell density is called quorum sensing. Catalyzes the transformation of S-ribosylhomocysteine (RHC) to homocysteine (HC) and 4,5-dihydroxy-2,3-pentadione (DPD). The protein is S-ribosylhomocysteine lyase of Clostridium beijerinckii (strain ATCC 51743 / NCIMB 8052) (Clostridium acetobutylicum).